Consider the following 197-residue polypeptide: Probable GTP-binding protein EngB (197 aa).

Residues 22-195 enclose the EngB-type G domain; the sequence is GYPEIALVGR…WNWIEAQAFG (174 aa). Residues 30-37, 57-61, 75-78, 142-145, and 174-176 contribute to the GTP site; these read GRSNVGKS, GKTQT, DVPG, TKSD, and FSA. Mg(2+)-binding residues include Ser37 and Thr59.

It belongs to the TRAFAC class TrmE-Era-EngA-EngB-Septin-like GTPase superfamily. EngB GTPase family. Mg(2+) is required as a cofactor.

Necessary for normal cell division and for the maintenance of normal septation. This Levilactobacillus brevis (strain ATCC 367 / BCRC 12310 / CIP 105137 / JCM 1170 / LMG 11437 / NCIMB 947 / NCTC 947) (Lactobacillus brevis) protein is Probable GTP-binding protein EngB.